We begin with the raw amino-acid sequence, 605 residues long: Protein Spindly (605 aa).

The residue at position 1 (methionine 1) is an N-acetylmethionine. A coiled-coil region spans residues 3–442; it reads TDIVINLRCK…ELKLKYEPEE (440 aa). Residues serine 513, serine 515, and serine 555 each carry the phosphoserine modification. Residues 545-581 are disordered; it reads LSERSGNTLNSPRLAAESKLQTEVKEGKETASKLEKE. Residues 564–581 show a composition bias toward basic and acidic residues; the sequence is LQTEVKEGKETASKLEKE.

It belongs to the Spindly family. As to quaternary structure, interacts with KNTC1 and ZW10. These interactions appear weak and may be transient or indirect. Interacts with dynein intermediate chain and dynactin (DCTN1). Interacts with the catalytically active form of USP45. Post-translationally, monoubiquitinated with'Lys-48' linkage. Deubiquitinated by USP45.

The protein resides in the cytoplasm. The protein localises to the cytoskeleton. It localises to the microtubule organizing center. It is found in the centrosome. Its subcellular location is the chromosome. The protein resides in the centromere. The protein localises to the kinetochore. It localises to the nucleus. It is found in the spindle pole. Its function is as follows. Required for the localization of dynein and dynactin to the mitotic kintochore. Dynein is believed to control the initial lateral interaction between the kinetochore and spindle microtubules and to facilitate the subsequent formation of end-on kinetochore-microtubule attachments mediated by the NDC80 complex. Also required for correct spindle orientation. Does not appear to be required for the removal of spindle assembly checkpoint (SAC) proteins from the kinetochore upon bipolar spindle attachment. Acts as an adapter protein linking the dynein motor complex to various cargos and converts dynein from a non-processive to a highly processive motor in the presence of dynactin. Facilitates the interaction between dynein and dynactin and activates dynein processivity (the ability to move along a microtubule for a long distance without falling off the track). Plays a role in cell migration. The sequence is that of Protein Spindly from Macaca fascicularis (Crab-eating macaque).